A 248-amino-acid chain; its full sequence is 1-(5-phosphoribosyl)-5-[(5-phosphoribosylamino)methylideneamino] imidazole-4-carboxamide isomerase (248 aa).

The Proton acceptor role is filled by D8. D129 acts as the Proton donor in catalysis.

It belongs to the HisA/HisF family.

It is found in the cytoplasm. It carries out the reaction 1-(5-phospho-beta-D-ribosyl)-5-[(5-phospho-beta-D-ribosylamino)methylideneamino]imidazole-4-carboxamide = 5-[(5-phospho-1-deoxy-D-ribulos-1-ylimino)methylamino]-1-(5-phospho-beta-D-ribosyl)imidazole-4-carboxamide. Its pathway is amino-acid biosynthesis; L-histidine biosynthesis; L-histidine from 5-phospho-alpha-D-ribose 1-diphosphate: step 4/9. This chain is 1-(5-phosphoribosyl)-5-[(5-phosphoribosylamino)methylideneamino] imidazole-4-carboxamide isomerase, found in Sinorhizobium medicae (strain WSM419) (Ensifer medicae).